We begin with the raw amino-acid sequence, 91 residues long: Small ribosomal subunit protein uS15c (91 aa).

This sequence belongs to the universal ribosomal protein uS15 family. Part of the 30S ribosomal subunit.

The protein localises to the plastid. It localises to the chloroplast. This Cicer arietinum (Chickpea) protein is Small ribosomal subunit protein uS15c (rps15).